A 1241-amino-acid polypeptide reads, in one-letter code: DNA-directed RNA polymerase subunit beta (1241 aa).

Residues 1201–1224 form a disordered region; it reads AEEEQDTDVDYITEDDFESPDPEI.

Belongs to the RNA polymerase beta chain family. In terms of assembly, the RNAP catalytic core consists of 2 alpha, 1 beta, 1 beta' and 1 omega subunit. When a sigma factor is associated with the core the holoenzyme is formed, which can initiate transcription.

The enzyme catalyses RNA(n) + a ribonucleoside 5'-triphosphate = RNA(n+1) + diphosphate. Functionally, DNA-dependent RNA polymerase catalyzes the transcription of DNA into RNA using the four ribonucleoside triphosphates as substrates. The chain is DNA-directed RNA polymerase subunit beta from Alkaliphilus oremlandii (strain OhILAs) (Clostridium oremlandii (strain OhILAs)).